Reading from the N-terminus, the 385-residue chain is MTTTGSNSNHNHHESNNNNNNPSTRSWGTAVSGQSVSTSGSMGSPSSRSEQTITVVTSTSDTTFQRLNNLDIQGDDAGSQGASGVKKKKRGQRAAGPDKTGRGLRQFSMKVCEKVESKGRTTYNEVADELVAEFALPNNDGTSPDQQQYDEKNIRRRVYDALNVLMAMDIISKDKKEIQWRGLPRTSLSDIEELKNERLSLRNRIEKKTAYSQELEEQYVGLQNLIQRNEHLYSSGNAPSGGVALPFILVQTRPHATVEVEISEDMQLVHFDFNSTPFELHDDNFVLKTMKFCDQPPQQPNGRNNSQLVCHNFTPENPNKGPSTGPTPQLDMYETHLQSQQHQQHSQLQIIPMPETNNVTSSADTAPVKSPSLPGIMNSSMKPEN.

2 disordered regions span residues 1–53 (MTTT…EQTI) and 71–102 (DIQG…KTGR). Residues 22 to 31 (PSTRSWGTAV) show a composition bias toward polar residues. Over residues 32 to 53 (SGQSVSTSGSMGSPSSRSEQTI) the composition is skewed to low complexity. Residues 101 to 184 (GRGLRQFSMK…KKEIQWRGLP (84 aa)) mediate DNA binding. The DEF box signature appears at 150–184 (DEKNIRRRVYDALNVLMAMDIISKDKKEIQWRGLP). Residues 185-234 (RTSLSDIEELKNERLSLRNRIEKKTAYSQELEEQYVGLQNLIQRNEHLYS) adopt a coiled-coil conformation. The disordered stretch occupies residues 296–385 (PPQQPNGRNN…IMNSSMKPEN (90 aa)). Positions 300–327 (PNGRNNSQLVCHNFTPENPNKGPSTGPT) are enriched in polar residues. Low complexity predominate over residues 336–349 (HLQSQQHQQHSQLQ). Over residues 355 to 364 (ETNNVTSSAD) the composition is skewed to polar residues.

Belongs to the E2F/DP family. As to quaternary structure, heterodimer with non-phosphorylated E2FC. No interaction with phosphorylated E2FC. Interacts preferentially with E2FC, but also with E2FA and E2FB. Interacts with SKP2A. Targeted for proteasomal degradation by the SCF(SKP2A) E3 ubiquitin ligase complex. In terms of processing, phosphorylated. As to expression, ubiquitous.

It is found in the nucleus. Its subcellular location is the cytoplasm. In terms of biological role, involved in the regulation of the G1/S transition. Increases the DNA binding activity of E2F proteins after heterodimerization. The complex DPB/E2FC restricts cell division and lateral root initiation and may function as a negative regulator of E2F-regulated genes. The interaction with SKP2A is controlled by auxin. The sequence is that of Transcription factor-like protein DPB (DPB) from Arabidopsis thaliana (Mouse-ear cress).